A 741-amino-acid chain; its full sequence is Mitofusin-1 (741 aa).

Residues 1–584 lie on the Cytoplasmic side of the membrane; that stretch reads MAETVSPLKH…AAQEELMITL (584 aa). The part of a helix bundle domain, formed by helices from N-terminal and C-terminal regions stretch occupies residues 9–73; the sequence is KHFVLAKKAI…LAVIGEVLSR (65 aa). The region spanning 72-321 is the Dynamin-type G domain; the sequence is SRRHMKVAFF…ARLQEFQNFE (250 aa). Positions 82 to 89 are G1 motif; it reads GRTSSGKS. 85–90 is a GTP binding site; it reads SSGKSS. The interval 108-109 is G2 motif; sequence TT. Residues 178–181 are G3 motif; that stretch reads DSPG. 237–240 is a binding site for GTP; that stretch reads NRWD. The G4 motif stretch occupies residues 237–240; that stretch reads NRWD. Position 266 (E266) is a region of interest, G5 motif. The GTP site is built by S284 and K286. A part of a helix bundle domain, formed by helices from N-terminal and C-terminal regions region spans residues 338 to 364; sequence EQHTIRAKQILDTVKNILDSVNVAAAE. The stretch at 371–408 forms a coiled coil; sequence EEREDQIDRLDFIRNQMNLLTLDVKKKIKEVTEEVANK. The chain crosses the membrane as a helical span at residues 585 to 605; the sequence is ITGLASLTSRTSMGIIVVGGV. The Mitochondrial intermembrane portion of the chain corresponds to 606–608; that stretch reads IWK. The helical transmembrane segment at 609 to 629 threads the bilayer; sequence TVGWKLISVTLSMYGALYLYE. Over 630–741 the chain is Cytoplasmic; it reads RLTWTTRAKE…QFLHPSSGES (112 aa). Positions 677–735 form a coiled coil; the sequence is FARLCQQVDVTQKHLEEEIARLSKEIDQLEKIQNNSKLLRNKAVQLESELENFSKQFLH. Residues 703-734 are part of a helix bundle domain, formed by helices from N-terminal and C-terminal regions; sequence DQLEKIQNNSKLLRNKAVQLESELENFSKQFL.

Belongs to the TRAFAC class dynamin-like GTPase superfamily. Dynamin/Fzo/YdjA family. Mitofusin subfamily. As to quaternary structure, homodimer, also in the absence of bound GTP. Forms higher oligomers in the presence of a transition state GTP analog. Forms homomultimers and heteromultimers with MFN2. Oligomerization is essential for mitochondrion fusion. Component of a high molecular weight multiprotein complex. Interacts with VAT1. Interacts with THG1L; THG1L probably functions as a guanyl-nucleotide exchange factor/GEF, activating MFN1. Post-translationally, ubiquitinated by MARCHF5. When mitochondria are depolarized and dysfunctional, it is ubiquitinated by a SCF (SKP1-CUL1-F-box protein) E3 ubiquitin-protein ligase complex that contains FBXO7 and PRKN. Ubiquitinated by non-degradative ubiquitin by PRKN, promoting mitochondrial fusion; deubiquitination by USP30 inhibits mitochondrial fusion. In terms of tissue distribution, detected in adult heart. Detected in embryos (at protein level). Widely expressed.

It is found in the mitochondrion outer membrane. The catalysed reaction is GTP + H2O = GDP + phosphate + H(+). In terms of biological role, mitochondrial outer membrane GTPase that mediates mitochondrial clustering and fusion. Membrane clustering requires GTPase activity. It may involve a major rearrangement of the coiled coil domains. Mitochondria are highly dynamic organelles, and their morphology is determined by the equilibrium between mitochondrial fusion and fission events. Overexpression induces the formation of mitochondrial networks (in vitro). Has low GTPase activity. The chain is Mitofusin-1 (Mfn1) from Mus musculus (Mouse).